Consider the following 104-residue polypeptide: Protein U9 (104 aa).

Residues 37–54 (GVQGLNADCSYVKSQCIK) traverse the membrane as a helical segment.

It localises to the host membrane. In Human herpesvirus 6B (HHV-6 variant B), this protein is Protein U9 (U9).